We begin with the raw amino-acid sequence, 382 residues long: uncharacterized protein (382 aa).

12 consecutive transmembrane segments (helical) span residues 14–34 (GLLLLTLAIAVLNTLVLLWLA), 45–65 (MVSSSYFTGNLVGTLFTGYLI), 75–95 (YLASLIFAAGCVGLGVMVGFW), 102–122 (FIAGIGCAMIWVVVESALMCS), 131–151 (LLAAYMMVYYMGTFLGQLLVS), 157–177 (LLHVLPWVTGMILAGILPLLF), 204–224 (LGVNGCIISGIVLGSLYGLMP), 231–251 (GMANASIGFWMAVLVSAGILG), 270–290 (VQVFVVILGSIAMLTQAAMAP), 291–311 (ALFILGAAGFTLYPVAMAWAC), 325–345 (ALLLSYTVGSLLGPSFAAMLM), and 349–369 (SDNLLFIMIASVSFIYLLMLL).

Belongs to the major facilitator superfamily. YcaD (TC 2.A.1.26) family.

Its subcellular location is the cell inner membrane. This is an uncharacterized protein from Salmonella paratyphi A (strain ATCC 9150 / SARB42).